The chain runs to 707 residues: 65-kDa microtubule-associated protein 3 (707 aa).

5 coiled-coil regions span residues 49 to 84 (LEVY…CSAM), 157 to 179 (NLSM…EKID), 269 to 289 (QQEY…ITEA), 354 to 374 (IVDA…IKEE), and 464 to 486 (LEEY…DQKK). The interval 495-574 (QEALYGSKPS…PSRKQSMNPS (80 aa)) is disordered. Low complexity predominate over residues 500-512 (GSKPSPSKPLGGK). Serine 504 and serine 528 each carry phosphoserine.

Belongs to the MAP65/ASE1 family. Forms a dimer. Binds to microtubules (MT) during cell division. Bundles polymerized MT via the formation of 25-nm crossbridges with centrally located endocytic MT, and midline phragmoplast MT. As to expression, expressed in all tissues enriched in dividing cells, such as the root and shoot apical meristem, foliar primordia, and young leaves, and embryos.

It localises to the nucleus. Its subcellular location is the cytoplasm. The protein localises to the cytoskeleton. The protein resides in the phragmoplast. Its function is as follows. Microtubule-associated protein that plays a critical role in organizing the mitotic microtubule array during both early and late mitosis in all plant organs. Essential for the cytokinesis, especially in roots, by maintaining the integrity of the overlapped microtubules in the phragmoplast. Required during root morphogenesis. Needed for giant cell development during root knot nematode infection, where cytokinesis is initiated but not completed. The chain is 65-kDa microtubule-associated protein 3 (MAP65-3) from Arabidopsis thaliana (Mouse-ear cress).